Consider the following 251-residue polypeptide: Isopentenyl-diphosphate delta-isomerase (251 aa).

Residue Lys-49 coordinates substrate. 2 residues coordinate Mg(2+): His-53 and His-66. In terms of domain architecture, Nudix hydrolase spans 64-212 (LLHRAFSVFL…SNSFTPWFKL (149 aa)). Substrate-binding residues include Arg-86 and Lys-90. Cys-102 is an active-site residue. Substrate is bound at residue Ser-103. Residues Glu-162 and Glu-164 each coordinate Mg(2+). Glu-164 is an active-site residue.

Belongs to the IPP isomerase type 1 family. Requires Mg(2+) as cofactor.

The protein localises to the cytoplasm. The catalysed reaction is isopentenyl diphosphate = dimethylallyl diphosphate. The protein operates within isoprenoid biosynthesis; dimethylallyl diphosphate biosynthesis; dimethylallyl diphosphate from isopentenyl diphosphate: step 1/1. Its function is as follows. Isopentenyl-diphosphate delta-isomerase; part of the second module of ergosterol biosynthesis pathway that includes the middle steps of the pathway. The second module is carried out in the vacuole and involves the formation of farnesyl diphosphate, which is also an important intermediate in the biosynthesis of ubiquinone, dolichol, heme and prenylated proteins. Activity by the mevalonate kinase first converts mevalonate into 5-phosphomevalonate. 5-phosphomevalonate is then further converted to 5-diphosphomevalonate by the phosphomevalonate kinase. The diphosphomevalonate decarboxylase then produces isopentenyl diphosphate. The isopentenyl-diphosphate delta-isomerase then catalyzes the 1,3-allylic rearrangement of the homoallylic substrate isopentenyl (IPP) to its highly electrophilic allylic isomer, dimethylallyl diphosphate (DMAPP). Finally the farnesyl diphosphate synthase catalyzes the sequential condensation of isopentenyl pyrophosphate with dimethylallyl pyrophosphate, and then with the resultant geranylpyrophosphate to the ultimate product farnesyl pyrophosphate. The polypeptide is Isopentenyl-diphosphate delta-isomerase (Phaffia rhodozyma (Yeast)).